A 577-amino-acid chain; its full sequence is Methionine--tRNA ligase (577 aa).

A 'HIGH' region motif is present at residues 21-31 (PYANGPLHVGH). Zn(2+)-binding residues include cysteine 153, cysteine 156, cysteine 166, and cysteine 169. The 'KMSKS' region motif lies at 355-359 (QMSTS). ATP is bound at residue threonine 358.

It belongs to the class-I aminoacyl-tRNA synthetase family. MetG type 1 subfamily. Monomer. Requires Zn(2+) as cofactor.

The protein localises to the cytoplasm. The enzyme catalyses tRNA(Met) + L-methionine + ATP = L-methionyl-tRNA(Met) + AMP + diphosphate. Functionally, is required not only for elongation of protein synthesis but also for the initiation of all mRNA translation through initiator tRNA(fMet) aminoacylation. This Rubrobacter xylanophilus (strain DSM 9941 / JCM 11954 / NBRC 16129 / PRD-1) protein is Methionine--tRNA ligase.